Reading from the N-terminus, the 745-residue chain is Phosphoribosylformylglycinamidine synthase subunit PurL (745 aa).

Residue His-50 is part of the active site. ATP is bound by residues Tyr-53 and Lys-92. Glu-94 lines the Mg(2+) pocket. Substrate contacts are provided by residues 95–98 and Arg-117; that span reads SHNH. His-96 acts as the Proton acceptor in catalysis. Asp-118 contacts Mg(2+). Gln-241 is a substrate binding site. Asp-269 contacts Mg(2+). Position 313–315 (313–315) interacts with substrate; sequence ESQ. Residues Asp-495 and Gly-532 each contribute to the ATP site. Residue Asn-533 coordinates Mg(2+). Ser-535 contributes to the substrate binding site.

This sequence belongs to the FGAMS family. Monomer. Part of the FGAM synthase complex composed of 1 PurL, 1 PurQ and 2 PurS subunits.

Its subcellular location is the cytoplasm. The catalysed reaction is N(2)-formyl-N(1)-(5-phospho-beta-D-ribosyl)glycinamide + L-glutamine + ATP + H2O = 2-formamido-N(1)-(5-O-phospho-beta-D-ribosyl)acetamidine + L-glutamate + ADP + phosphate + H(+). The protein operates within purine metabolism; IMP biosynthesis via de novo pathway; 5-amino-1-(5-phospho-D-ribosyl)imidazole from N(2)-formyl-N(1)-(5-phospho-D-ribosyl)glycinamide: step 1/2. Its function is as follows. Part of the phosphoribosylformylglycinamidine synthase complex involved in the purines biosynthetic pathway. Catalyzes the ATP-dependent conversion of formylglycinamide ribonucleotide (FGAR) and glutamine to yield formylglycinamidine ribonucleotide (FGAM) and glutamate. The FGAM synthase complex is composed of three subunits. PurQ produces an ammonia molecule by converting glutamine to glutamate. PurL transfers the ammonia molecule to FGAR to form FGAM in an ATP-dependent manner. PurS interacts with PurQ and PurL and is thought to assist in the transfer of the ammonia molecule from PurQ to PurL. In Allorhizobium ampelinum (strain ATCC BAA-846 / DSM 112012 / S4) (Agrobacterium vitis (strain S4)), this protein is Phosphoribosylformylglycinamidine synthase subunit PurL.